Consider the following 95-residue polypeptide: Aspartyl/glutamyl-tRNA(Asn/Gln) amidotransferase subunit C (95 aa).

Positions 74–95 are disordered; that stretch reads GQALEPAPDADNEHFLVPQVVE.

It belongs to the GatC family. In terms of assembly, heterotrimer of A, B and C subunits.

It carries out the reaction L-glutamyl-tRNA(Gln) + L-glutamine + ATP + H2O = L-glutaminyl-tRNA(Gln) + L-glutamate + ADP + phosphate + H(+). The enzyme catalyses L-aspartyl-tRNA(Asn) + L-glutamine + ATP + H2O = L-asparaginyl-tRNA(Asn) + L-glutamate + ADP + phosphate + 2 H(+). In terms of biological role, allows the formation of correctly charged Asn-tRNA(Asn) or Gln-tRNA(Gln) through the transamidation of misacylated Asp-tRNA(Asn) or Glu-tRNA(Gln) in organisms which lack either or both of asparaginyl-tRNA or glutaminyl-tRNA synthetases. The reaction takes place in the presence of glutamine and ATP through an activated phospho-Asp-tRNA(Asn) or phospho-Glu-tRNA(Gln). The protein is Aspartyl/glutamyl-tRNA(Asn/Gln) amidotransferase subunit C of Salinibacter ruber (strain DSM 13855 / M31).